Consider the following 310-residue polypeptide: Eukaryotic translation initiation factor 3 subunit G (310 aa).

Disordered regions lie at residues M1–K32 and T179–A229. A compositionally biased stretch (low complexity) spans G187–P196. Over residues G211–A229 the composition is skewed to basic and acidic residues. An RRM domain is found at A229 to P307.

This sequence belongs to the eIF-3 subunit G family. As to quaternary structure, component of the eukaryotic translation initiation factor 3 (eIF-3) complex, which is composed of 13 subunits: eif3a, eif3b, eif3c, eif3d, eif3e, eif3f, eif3g, eif3h, eif3i, eif3j, eif3k, eif3l and eif3m.

Its subcellular location is the cytoplasm. Its function is as follows. RNA-binding component of the eukaryotic translation initiation factor 3 (eIF-3) complex, which is involved in protein synthesis of a specialized repertoire of mRNAs and, together with other initiation factors, stimulates binding of mRNA and methionyl-tRNAi to the 40S ribosome. The eIF-3 complex specifically targets and initiates translation of a subset of mRNAs involved in cell proliferation. This subunit can bind 18S rRNA. This chain is Eukaryotic translation initiation factor 3 subunit G (eif3g), found in Xenopus tropicalis (Western clawed frog).